Consider the following 339-residue polypeptide: DNA-directed RNA polymerase subunit alpha (339 aa).

An alpha N-terminal domain (alpha-NTD) region spans residues 1–233 (MVREEVAGST…DLFLPFLHAE (233 aa)). The alpha C-terminal domain (alpha-CTD) stretch occupies residues 264–339 (KKGIPLNCIF…IDLLKNKLSF (76 aa)).

The protein belongs to the RNA polymerase alpha chain family. In plastids the minimal PEP RNA polymerase catalytic core is composed of four subunits: alpha, beta, beta', and beta''. When a (nuclear-encoded) sigma factor is associated with the core the holoenzyme is formed, which can initiate transcription.

The protein resides in the plastid. Its subcellular location is the chloroplast. The enzyme catalyses RNA(n) + a ribonucleoside 5'-triphosphate = RNA(n+1) + diphosphate. DNA-dependent RNA polymerase catalyzes the transcription of DNA into RNA using the four ribonucleoside triphosphates as substrates. This chain is DNA-directed RNA polymerase subunit alpha, found in Crithopsis delileana.